We begin with the raw amino-acid sequence, 536 residues long: Chaperonin GroEL 2 (536 aa).

Residues 29–32, 86–90, glycine 413, 476–478, and aspartate 492 contribute to the ATP site; these read TLGP, DGTTT, and NAA.

It belongs to the chaperonin (HSP60) family. Forms a cylinder of 14 subunits composed of two heptameric rings stacked back-to-back. Interacts with the co-chaperonin GroES.

Its subcellular location is the cytoplasm. The catalysed reaction is ATP + H2O + a folded polypeptide = ADP + phosphate + an unfolded polypeptide.. Together with its co-chaperonin GroES, plays an essential role in assisting protein folding. The GroEL-GroES system forms a nano-cage that allows encapsulation of the non-native substrate proteins and provides a physical environment optimized to promote and accelerate protein folding. This chain is Chaperonin GroEL 2, found in Moorella thermoacetica (strain ATCC 39073 / JCM 9320).